The chain runs to 158 residues: Urease accessory protein UreE (158 aa).

The protein belongs to the UreE family.

Its subcellular location is the cytoplasm. Functionally, involved in urease metallocenter assembly. Binds nickel. Probably functions as a nickel donor during metallocenter assembly. In Corynebacterium urealyticum (strain ATCC 43042 / DSM 7109), this protein is Urease accessory protein UreE.